A 657-amino-acid polypeptide reads, in one-letter code: uncharacterized protein (657 aa).

Serine 114 is modified (phosphoserine). Disordered stretches follow at residues 142-216 (LASQ…SDEE), 228-248 (SSREKNTNQGFSSANVSEEEE), 291-312 (STRSRADYPQSHVSSDTASHTP), 335-354 (SSPGRSEAETVDEPVSEGAD), and 399-522 (AEAS…SGRH). Over residues 143–169 (ASQNTDKTSQNQARELPVTENNAQNAK) the composition is skewed to polar residues. Basic and acidic residues predominate over residues 190–206 (AGKERTLQTPKQKEPAR). Serine 213 is modified (phosphoserine). 2 stretches are compositionally biased toward polar residues: residues 234–243 (TNQGFSSANV) and 301–312 (SHVSSDTASHTP). A compositionally biased stretch (acidic residues) spans 343 to 354 (ETVDEPVSEGAD). The segment covering 437-451 (SASSASAIQQDSTSS) has biased composition (low complexity). Positions 462 to 484 (NTVSSAYSEDFENSPSLTASEPT) are enriched in polar residues. Basic and acidic residues predominate over residues 485–495 (AHSKESLDRTL). The span at 499 to 513 (SESSSSVKTDLPQTA) shows a compositional bias: polar residues.

This is an uncharacterized protein from Homo sapiens (Human).